Reading from the N-terminus, the 477-residue chain is P3 protein (477 aa).

Residues 1 to 21 are disordered; that stretch reads MVFRSGEGHSLQWPGPEGGTG. Transmembrane regions (helical) follow at residues 225–245, 253–273, 281–301, 320–340, 361–381, 383–403, 417–437, and 450–470; these read PMLL…FLMA, ALAL…SYLF, VTLA…FLPL, VSKI…GVVI, VLLL…LAGV, LPIV…GYGL, VSIE…QLSL, and FLVA…HFIY.

It belongs to the bile acid:sodium symporter (BASS) (TC 2.A.28) family.

The protein localises to the membrane. In terms of biological role, the ubiquitous expression and the conservation of the sequence in distant animal species suggest that the gene codes for a protein with housekeeping functions. This is P3 protein (SLC10A3) from Bos taurus (Bovine).